The chain runs to 91 residues: Small ribosomal subunit protein uS7 (91 aa).

The protein belongs to the universal ribosomal protein uS7 family. As to quaternary structure, part of the 30S ribosomal subunit. Contacts proteins S9 and S11.

In terms of biological role, one of the primary rRNA binding proteins, it binds directly to 16S rRNA where it nucleates assembly of the head domain of the 30S subunit. Is located at the subunit interface close to the decoding center, probably blocks exit of the E-site tRNA. The chain is Small ribosomal subunit protein uS7 (rpsG) from Apple proliferation phytoplasma.